We begin with the raw amino-acid sequence, 384 residues long: Secreted LysM effector LysM14 (384 aa).

Residues 1-35 (MGWSPRWKVMLRGIFNAMISIHILLSLLFAHIATA) form the signal peptide. Positions 64-112 (YTYTIQEGDTCAKLAQRYQVTTSNIETWNVGSWGWPGCAKIKQGDFVCL) constitute a LysM domain. Residues 185 to 220 (STTKSAASKTTTTSNPTTTSKTTITSKPTTTSKPTT) form a disordered region.

The protein belongs to the secreted LysM effector family.

The protein localises to the secreted. Its function is as follows. Secreted LysM effector that might have a role in sequestration of chitin oligosaccharides (breakdown products of fungal cell walls that are released during invasion and act as triggers of host immunity) to dampen host defense. In Penicillium expansum (Blue mold rot fungus), this protein is Secreted LysM effector LysM14.